The chain runs to 270 residues: MTVNTKTYSARAETHASPVAQRLFRLMESKKTNLCASIDVDTTKEFLELIDKLGPYVCLIKTHIDIINDFSYESTIEPLLELSRKHQFMIFEDRKFADIGNTVKKQYIGGVYKISSWADITNAHGVTGNGVVEGLKQGAKETTTDQEPRGLLMLAELSSVGSLAYGEYSQKTVEIAKSDKEFVIGFIAQRDMGGQEEGFDWIIMTPGVGLDDKGDGLGQQYRTVNEVVSTGTDIIIVGRGLFGKGRDPEVEGKRYRDAGWNAYLKKTGQL.

Substrate is bound by residues Asp39, 61–63 (KTH), 93–102 (DRKFADIGNT), Tyr221, and Arg239. Residue Lys95 is the Proton donor of the active site.

Belongs to the OMP decarboxylase family.

The catalysed reaction is orotidine 5'-phosphate + H(+) = UMP + CO2. Its pathway is pyrimidine metabolism; UMP biosynthesis via de novo pathway; UMP from orotate: step 2/2. This chain is Orotidine 5'-phosphate decarboxylase (URA3), found in Candida dubliniensis (strain CD36 / ATCC MYA-646 / CBS 7987 / NCPF 3949 / NRRL Y-17841) (Yeast).